A 438-amino-acid polypeptide reads, in one-letter code: 3-phosphoshikimate 1-carboxyvinyltransferase (438 aa).

3 residues coordinate 3-phosphoshikimate: Lys21, Ser22, and Arg26. Lys21 provides a ligand contact to phosphoenolpyruvate. Phosphoenolpyruvate contacts are provided by Gly95 and Arg123. Residues Ser167, Gln169, Asp315, and Lys342 each coordinate 3-phosphoshikimate. Gln169 lines the phosphoenolpyruvate pocket. Asp315 acts as the Proton acceptor in catalysis. Phosphoenolpyruvate-binding residues include Arg346 and Arg387.

It belongs to the EPSP synthase family. As to quaternary structure, monomer.

Its subcellular location is the cytoplasm. It carries out the reaction 3-phosphoshikimate + phosphoenolpyruvate = 5-O-(1-carboxyvinyl)-3-phosphoshikimate + phosphate. Its pathway is metabolic intermediate biosynthesis; chorismate biosynthesis; chorismate from D-erythrose 4-phosphate and phosphoenolpyruvate: step 6/7. Functionally, catalyzes the transfer of the enolpyruvyl moiety of phosphoenolpyruvate (PEP) to the 5-hydroxyl of shikimate-3-phosphate (S3P) to produce enolpyruvyl shikimate-3-phosphate and inorganic phosphate. The protein is 3-phosphoshikimate 1-carboxyvinyltransferase of Coxiella burnetii (strain CbuG_Q212) (Coxiella burnetii (strain Q212)).